A 252-amino-acid chain; its full sequence is 5'-nucleotidase SurE (252 aa).

A divalent metal cation is bound by residues aspartate 8, aspartate 9, serine 39, and asparagine 95.

Belongs to the SurE nucleotidase family. The cofactor is a divalent metal cation.

Its subcellular location is the cytoplasm. The enzyme catalyses a ribonucleoside 5'-phosphate + H2O = a ribonucleoside + phosphate. Nucleotidase that shows phosphatase activity on nucleoside 5'-monophosphates. The sequence is that of 5'-nucleotidase SurE from Clostridium botulinum (strain Okra / Type B1).